A 992-amino-acid chain; its full sequence is ATP-dependent 6-phosphofructokinase subunit alpha (992 aa).

Residues 1–558 (MNNSVYGVAF…LYSNFMSTTV (558 aa)) are N-terminal catalytic PFK domain 1. ATP contacts are provided by residues Gly193, 256–257 (RS), and 286–289 (GDGS). Residue Asp287 participates in Mg(2+) binding. Beta-D-fructose 6-phosphate-binding positions include 332–334 (SID), Arg369, 376–378 (MGR), Glu433, Lys460, and 466–469 (HVQR). The active-site Proton acceptor is Asp334. The segment at 559–572 (NDDGSQLLPEADRL) is interdomain linker. The tract at residues 573 to 992 (NIAIVHVGAP…AAKEDSALYV (420 aa)) is C-terminal regulatory PFK domain 2. Beta-D-fructose 2,6-bisphosphate is bound by residues Arg643, 700–704 (TVSNN), Arg738, 745–747 (QGG), Glu805, Arg831, 837–840 (HVQQ), and Arg929.

Belongs to the phosphofructokinase type A (PFKA) family. ATP-dependent PFK group I subfamily. Eukaryotic two domain clade 'E' sub-subfamily. In terms of assembly, heterooctamer of 4 alpha and 4 beta chains. Requires Mg(2+) as cofactor.

The protein localises to the cytoplasm. The enzyme catalyses beta-D-fructose 6-phosphate + ATP = beta-D-fructose 1,6-bisphosphate + ADP + H(+). It functions in the pathway carbohydrate degradation; glycolysis; D-glyceraldehyde 3-phosphate and glycerone phosphate from D-glucose: step 3/4. Its activity is regulated as follows. Allosterically activated by ADP, AMP, or fructose 2,6-bisphosphate, and allosterically inhibited by ATP or citrate. Catalyzes the phosphorylation of D-fructose 6-phosphate to fructose 1,6-bisphosphate by ATP, the first committing step of glycolysis. This Kluyveromyces lactis (strain ATCC 8585 / CBS 2359 / DSM 70799 / NBRC 1267 / NRRL Y-1140 / WM37) (Yeast) protein is ATP-dependent 6-phosphofructokinase subunit alpha (PFK1).